Consider the following 39-residue polypeptide: Cytochrome b559 subunit beta (39 aa).

The helical transmembrane segment at 14–30 threads the bilayer; that stretch reads WLAIHGLAVPTVFSLGS. A heme-binding site is contributed by histidine 18.

The protein belongs to the PsbE/PsbF family. In terms of assembly, heterodimer of an alpha subunit and a beta subunit. PSII is composed of 1 copy each of membrane proteins PsbA, PsbB, PsbC, PsbD, PsbE, PsbF, PsbH, PsbI, PsbJ, PsbK, PsbL, PsbM, PsbT, PsbX, PsbY, PsbZ, Psb30/Ycf12, at least 3 peripheral proteins of the oxygen-evolving complex and a large number of cofactors. It forms dimeric complexes. Heme b is required as a cofactor.

It is found in the plastid. Its subcellular location is the chloroplast thylakoid membrane. Functionally, this b-type cytochrome is tightly associated with the reaction center of photosystem II (PSII). PSII is a light-driven water:plastoquinone oxidoreductase that uses light energy to abstract electrons from H(2)O, generating O(2) and a proton gradient subsequently used for ATP formation. It consists of a core antenna complex that captures photons, and an electron transfer chain that converts photonic excitation into a charge separation. The polypeptide is Cytochrome b559 subunit beta (Huperzia lucidula (Shining clubmoss)).